A 123-amino-acid chain; its full sequence is Large ribosomal subunit protein bL12 (123 aa).

This sequence belongs to the bacterial ribosomal protein bL12 family. Homodimer. Part of the ribosomal stalk of the 50S ribosomal subunit. Forms a multimeric L10(L12)X complex, where L10 forms an elongated spine to which 2 to 4 L12 dimers bind in a sequential fashion. Binds GTP-bound translation factors.

Forms part of the ribosomal stalk which helps the ribosome interact with GTP-bound translation factors. Is thus essential for accurate translation. The sequence is that of Large ribosomal subunit protein bL12 from Rhodopseudomonas palustris (strain BisB18).